The chain runs to 481 residues: Aspartyl/glutamyl-tRNA(Asn/Gln) amidotransferase subunit B (481 aa).

It belongs to the GatB/GatE family. GatB subfamily. Heterotrimer of A, B and C subunits.

It catalyses the reaction L-glutamyl-tRNA(Gln) + L-glutamine + ATP + H2O = L-glutaminyl-tRNA(Gln) + L-glutamate + ADP + phosphate + H(+). The catalysed reaction is L-aspartyl-tRNA(Asn) + L-glutamine + ATP + H2O = L-asparaginyl-tRNA(Asn) + L-glutamate + ADP + phosphate + 2 H(+). In terms of biological role, allows the formation of correctly charged Asn-tRNA(Asn) or Gln-tRNA(Gln) through the transamidation of misacylated Asp-tRNA(Asn) or Glu-tRNA(Gln) in organisms which lack either or both of asparaginyl-tRNA or glutaminyl-tRNA synthetases. The reaction takes place in the presence of glutamine and ATP through an activated phospho-Asp-tRNA(Asn) or phospho-Glu-tRNA(Gln). The polypeptide is Aspartyl/glutamyl-tRNA(Asn/Gln) amidotransferase subunit B (Pseudomonas syringae pv. tomato (strain ATCC BAA-871 / DC3000)).